The primary structure comprises 530 residues: GMP synthase [glutamine-hydrolyzing] (530 aa).

In terms of domain architecture, Glutamine amidotransferase type-1 spans 4-205 (RILILDYGSQ…VKDICGCEGD (202 aa)). Catalysis depends on cysteine 84, which acts as the Nucleophile. Residues histidine 179 and glutamate 181 contribute to the active site. Residues 206–398 (WNMPDYISEA…LGLPPQMVYR (193 aa)) enclose the GMPS ATP-PPase domain. 233 to 239 (SGGVDSL) contributes to the ATP binding site.

As to quaternary structure, homodimer.

The catalysed reaction is XMP + L-glutamine + ATP + H2O = GMP + L-glutamate + AMP + diphosphate + 2 H(+). It participates in purine metabolism; GMP biosynthesis; GMP from XMP (L-Gln route): step 1/1. Its function is as follows. Catalyzes the synthesis of GMP from XMP. The protein is GMP synthase [glutamine-hydrolyzing] of Bordetella parapertussis (strain 12822 / ATCC BAA-587 / NCTC 13253).